Here is a 246-residue protein sequence, read N- to C-terminus: tRNA pseudouridine synthase A (246 aa).

Aspartate 52 (nucleophile) is an active-site residue. Tyrosine 111 provides a ligand contact to substrate.

Belongs to the tRNA pseudouridine synthase TruA family. As to quaternary structure, homodimer.

It catalyses the reaction uridine(38/39/40) in tRNA = pseudouridine(38/39/40) in tRNA. In terms of biological role, formation of pseudouridine at positions 38, 39 and 40 in the anticodon stem and loop of transfer RNAs. This chain is tRNA pseudouridine synthase A, found in Fervidobacterium nodosum (strain ATCC 35602 / DSM 5306 / Rt17-B1).